The primary structure comprises 76 residues: DNA-directed RNA polymerase subunit epsilon (76 aa).

It belongs to the RNA polymerase subunit epsilon family. RNAP is composed of a core of 2 alpha, a beta and a beta' subunit. The core is associated with a delta subunit, and at least one of epsilon or omega. When a sigma factor is associated with the core the holoenzyme is formed, which can initiate transcription.

The catalysed reaction is RNA(n) + a ribonucleoside 5'-triphosphate = RNA(n+1) + diphosphate. A non-essential component of RNA polymerase (RNAP). This Streptococcus mutans serotype c (strain ATCC 700610 / UA159) protein is DNA-directed RNA polymerase subunit epsilon.